A 185-amino-acid polypeptide reads, in one-letter code: Iron-sulfur assembly protein 2 (185 aa).

Fe cation contacts are provided by Cys-89, Cys-175, and Cys-177.

It belongs to the HesB/IscA family.

It is found in the mitochondrion matrix. Involved in the assembly of mitochondrial and cytoplasmic iron-sulfur proteins. Probably involved in the binding of an intermediate of Fe/S cluster assembly. The chain is Iron-sulfur assembly protein 2 (ISA2) from Saccharomyces cerevisiae (strain ATCC 204508 / S288c) (Baker's yeast).